The following is a 217-amino-acid chain: NADPH-dependent 3-demethoxyubiquinone 3-hydroxylase, mitochondrial (217 aa).

The transit peptide at 1 to 23 directs the protein to the mitochondrion; sequence MSAAGAIAAASVGRLRTGVRRPF. 2 repeat units span residues 48–129 and 130–217. A 2 X approximate tandem repeats region spans residues 48–217; sequence AVDRIIRVDH…SAAIYLSERF (170 aa). R51 provides a ligand contact to NADH. E60, E90, H93, E142, E178, and H181 together coordinate Fe cation. Residues Y212 and R216 each contribute to the NADH site.

The protein belongs to the COQ7 family. As to quaternary structure, component of a multi-subunit COQ enzyme complex. Interacts with COQ8B and COQ6. Interacts with COQ9. The cofactor is Fe cation. As to expression, highly expressed in tissues with high energy demand such as heart, muscle, liver, and kidney.

The protein resides in the mitochondrion inner membrane. It catalyses the reaction a 5-methoxy-2-methyl-3-(all-trans-polyprenyl)benzoquinone + NADH + O2 = a 3-demethylubiquinone + NAD(+) + H2O. Its pathway is cofactor biosynthesis; ubiquinone biosynthesis. Catalyzes the hydroxylation of the 5-methoxy-2-methyl-3-(all-trans-polyprenyl)benzoquinone at the C6 position and participates in the biosynthesis of ubiquinone. Catalyzes the reaction through a substrate-mediated reduction pathway, whereby NADH shuttles electrons to 5-methoxy-2-methyl-3-(all-trans-decaprenyl)benzoquinone, which then transfers the electrons to the two Fe(3+) centers. The binding of 5-methoxy-2-methyl-3-(all-trans-polyprenyl)benzoquinone (DMQn) mediates reduction of the diiron center by nicotinamide adenine dinucleotide (NADH) and initiates oxygen activation for subsequent DMQ hydroxylation. The physiological substrates are 5-methoxy-2-methyl-3-(all-trans-nonaprenyl)benzoquinone (DMQ(9)) and 5-methoxy-2-methyl-3-(all-trans-decaprenyl)benzoquinone (DMQ(10)), however in vitro the enzyme does not have any specificity concerning the length of the polyprenyl tail, and accepts tails of various lengths with similar efficiency. Also has a structural role in the COQ enzyme complex, stabilizing other COQ polypeptides. Involved in lifespan determination in a ubiquinone-independent manner. Plays a role in modulating mitochondrial stress responses, acting in the nucleus, perhaps via regulating gene expression, independent of its characterized mitochondrial function in ubiquinone biosynthesis. The chain is NADPH-dependent 3-demethoxyubiquinone 3-hydroxylase, mitochondrial from Mus musculus (Mouse).